Here is a 167-residue protein sequence, read N- to C-terminus: uncharacterized protein (167 aa).

A coiled-coil region spans residues Lys70–Val118. Over residues Glu128–Arg155 the composition is skewed to basic and acidic residues. The interval Glu128–Asp167 is disordered.

This is an uncharacterized protein from Archaeoglobus fulgidus (strain ATCC 49558 / DSM 4304 / JCM 9628 / NBRC 100126 / VC-16).